A 493-amino-acid polypeptide reads, in one-letter code: MFS-type transporter efuF (493 aa).

11 consecutive transmembrane segments (helical) span residues 90–110 (ITLV…NMLL), 117–137 (IMLP…CAVH), 147–167 (LLMG…LTTF), 179–199 (IFYG…YGVF), 211–231 (FLMI…YWHL), 279–299 (IALY…VGNF), 316–336 (LYTV…CTSS), 343–363 (STHL…LITL), 370–390 (GPTY…SCIF), 406–426 (AVTG…SLAF), and 435–455 (IPAL…VLGF).

This sequence belongs to the major facilitator superfamily.

The protein localises to the membrane. MFS-type transporter; part of the gene cluster that mediates the biosynthesis of enfumafungin, a glycosylated fernene-type triterpenoid with potent antifungal activity, mediated by its interaction with beta-1,3-glucan synthase and the fungal cell wall. Might facilitate the transport of glucose units to the subcellular site of enfumafungin biosynthesis. This is MFS-type transporter efuF from Hormonema carpetanum.